The following is a 268-amino-acid chain: 4-pyridoxolactonase (268 aa).

Residues histidine 96, histidine 98, aspartate 100, histidine 101, histidine 185, aspartate 207, and histidine 252 each contribute to the Zn(2+) site. Aspartate 100 serves as the catalytic Proton donor/acceptor.

It belongs to the metallo-beta-lactamase superfamily. As to quaternary structure, homodimer. Zn(2+) serves as cofactor.

The catalysed reaction is 4-pyridoxolactone + H2O = 4-pyridoxate + H(+). It participates in cofactor degradation; B6 vitamer degradation; 4-pyridoxate from pyridoxal: step 2/2. With respect to regulation, inhibited by Hg(2+). Involved in the degradation of pyridoxine or pyridoxamine (free, phosphate-unbound, forms of vitamin B6). Hydrolyzes 4-pyridoxolactone to 4-pyridoxic acid. Has lower activity toward N-hexanoyl-D,L-homoserine lactone, but is not active toward 5-pyridoxolactone and gamma-butyrolactone. This is 4-pyridoxolactonase from Mesorhizobium japonicum (strain LMG 29417 / CECT 9101 / MAFF 303099) (Mesorhizobium loti (strain MAFF 303099)).